The sequence spans 295 residues: Putative 23S rRNA (guanine-N(1)-)-methyltransferase (295 aa).

Residues C11, C14, C31, and H35 each coordinate Zn(2+). S-adenosyl-L-methionine is bound by residues Y74, 116 to 117 (TG), and H204.

Belongs to the methyltransferase superfamily. RlmA family.

Confers strong resistance to mycinamicin (MM) and tylosin (TY). May function as methyltransferase. The chain is Putative 23S rRNA (guanine-N(1)-)-methyltransferase (myrA) from Micromonospora griseorubida.